The following is a 185-amino-acid chain: Signal peptidase complex subunit 3 (185 aa).

Over 1 to 16 (MHTSIQRIQQTFSQAS) the chain is Cytoplasmic. A helical; Signal-anchor for type II membrane protein transmembrane segment spans residues 17-37 (TVLSIIAAIVFVVSYIQLVVA). Over 38–185 (NVWSLPEANF…KGSIKFPQLV (148 aa)) the chain is Lumenal. Asn-151 is a glycosylation site (N-linked (GlcNAc...) asparagine).

The protein belongs to the SPCS3 family. Component of the signal peptidase complex (SPC) composed of a catalytic subunit SEC11 and three accessory subunits SPC1, SPC2 and SPC3. The complex induces a local thinning of the ER membrane which is used to measure the length of the signal peptide (SP) h-region of protein substrates. This ensures the selectivity of the complex towards h-regions shorter than 18-20 amino acids. SPC associates with the translocon complex.

Its subcellular location is the endoplasmic reticulum membrane. Its function is as follows. Essential component of the signal peptidase complex (SPC) which catalyzes the cleavage of N-terminal signal sequences from nascent proteins as they are translocated into the lumen of the endoplasmic reticulum. Essential for the SPC catalytic activity, possibly by stabilizing and positioning the active center of the complex close to the lumenal surface. Essential for viability. This is Signal peptidase complex subunit 3 (SPC3) from Yarrowia lipolytica (strain CLIB 122 / E 150) (Yeast).